A 449-amino-acid polypeptide reads, in one-letter code: Phosphoglucosamine mutase (449 aa).

Serine 101 serves as the catalytic Phosphoserine intermediate. Serine 101, aspartate 242, aspartate 244, and aspartate 246 together coordinate Mg(2+). Serine 101 bears the Phosphoserine mark.

The protein belongs to the phosphohexose mutase family. Mg(2+) is required as a cofactor. In terms of processing, activated by phosphorylation.

The enzyme catalyses alpha-D-glucosamine 1-phosphate = D-glucosamine 6-phosphate. Functionally, catalyzes the conversion of glucosamine-6-phosphate to glucosamine-1-phosphate. The chain is Phosphoglucosamine mutase from Methylocella silvestris (strain DSM 15510 / CIP 108128 / LMG 27833 / NCIMB 13906 / BL2).